The primary structure comprises 150 residues: Large ribosomal subunit protein uL13 (150 aa).

The protein belongs to the universal ribosomal protein uL13 family. In terms of assembly, part of the 50S ribosomal subunit.

In terms of biological role, this protein is one of the early assembly proteins of the 50S ribosomal subunit, although it is not seen to bind rRNA by itself. It is important during the early stages of 50S assembly. This Chlamydia abortus (strain DSM 27085 / S26/3) (Chlamydophila abortus) protein is Large ribosomal subunit protein uL13.